We begin with the raw amino-acid sequence, 438 residues long: Gamma-glutamyl phosphate reductase (438 aa).

It belongs to the gamma-glutamyl phosphate reductase family.

The protein localises to the cytoplasm. It carries out the reaction L-glutamate 5-semialdehyde + phosphate + NADP(+) = L-glutamyl 5-phosphate + NADPH + H(+). The protein operates within amino-acid biosynthesis; L-proline biosynthesis; L-glutamate 5-semialdehyde from L-glutamate: step 2/2. Functionally, catalyzes the NADPH-dependent reduction of L-glutamate 5-phosphate into L-glutamate 5-semialdehyde and phosphate. The product spontaneously undergoes cyclization to form 1-pyrroline-5-carboxylate. The polypeptide is Gamma-glutamyl phosphate reductase (Prochlorococcus marinus (strain MIT 9303)).